The following is a 151-amino-acid chain: Small ribosomal subunit protein uS11 (151 aa).

It belongs to the universal ribosomal protein uS11 family.

The protein is Small ribosomal subunit protein uS11 (RPS14) of Podocoryna carnea (Hydrozoan).